A 224-amino-acid polypeptide reads, in one-letter code: uncharacterized protein (224 aa).

Positions 1-30 are cleaved as a signal peptide; sequence MSRSSSSMATVLVVLMVVSAGGLSPPCAAA. N-linked (GlcNAc...) asparagine glycosylation is present at N141.

Its subcellular location is the secreted. This is an uncharacterized protein from Oryza sativa subsp. japonica (Rice).